Here is a 391-residue protein sequence, read N- to C-terminus: 1-deoxy-D-xylulose 5-phosphate reductoisomerase (391 aa).

The NADPH site is built by T11, G12, S13, I14, and N126. K127 is a 1-deoxy-D-xylulose 5-phosphate binding site. E128 lines the NADPH pocket. Residue D152 participates in Mn(2+) binding. Residues S153, E154, S176, and H199 each coordinate 1-deoxy-D-xylulose 5-phosphate. Residue E154 coordinates Mn(2+). Residue G205 participates in NADPH binding. The 1-deoxy-D-xylulose 5-phosphate site is built by S212, N217, K218, and E221. Residue E221 participates in Mn(2+) binding.

The protein belongs to the DXR family. The cofactor is Mg(2+). Mn(2+) serves as cofactor.

It catalyses the reaction 2-C-methyl-D-erythritol 4-phosphate + NADP(+) = 1-deoxy-D-xylulose 5-phosphate + NADPH + H(+). It participates in isoprenoid biosynthesis; isopentenyl diphosphate biosynthesis via DXP pathway; isopentenyl diphosphate from 1-deoxy-D-xylulose 5-phosphate: step 1/6. Functionally, catalyzes the NADPH-dependent rearrangement and reduction of 1-deoxy-D-xylulose-5-phosphate (DXP) to 2-C-methyl-D-erythritol 4-phosphate (MEP). In Acidithiobacillus ferrooxidans (strain ATCC 53993 / BNL-5-31) (Leptospirillum ferrooxidans (ATCC 53993)), this protein is 1-deoxy-D-xylulose 5-phosphate reductoisomerase.